The sequence spans 168 residues: Chorismate pyruvate-lyase (168 aa).

Substrate is bound by residues Met-36, Arg-78, Leu-116, and Glu-157.

The protein belongs to the UbiC family. Monomer.

Its subcellular location is the cytoplasm. It catalyses the reaction chorismate = 4-hydroxybenzoate + pyruvate. It participates in cofactor biosynthesis; ubiquinone biosynthesis. In terms of biological role, removes the pyruvyl group from chorismate, with concomitant aromatization of the ring, to provide 4-hydroxybenzoate (4HB) for the ubiquinone pathway. In Yersinia enterocolitica serotype O:8 / biotype 1B (strain NCTC 13174 / 8081), this protein is Chorismate pyruvate-lyase.